The chain runs to 74 residues: Large ribosomal subunit protein bL31 (74 aa).

Belongs to the bacterial ribosomal protein bL31 family. Type A subfamily. As to quaternary structure, part of the 50S ribosomal subunit.

In terms of biological role, binds the 23S rRNA. The protein is Large ribosomal subunit protein bL31 of Afipia carboxidovorans (strain ATCC 49405 / DSM 1227 / KCTC 32145 / OM5) (Oligotropha carboxidovorans).